We begin with the raw amino-acid sequence, 356 residues long: S-adenosylmethionine:tRNA ribosyltransferase-isomerase (356 aa).

Belongs to the QueA family. As to quaternary structure, monomer.

It is found in the cytoplasm. It catalyses the reaction 7-aminomethyl-7-carbaguanosine(34) in tRNA + S-adenosyl-L-methionine = epoxyqueuosine(34) in tRNA + adenine + L-methionine + 2 H(+). It functions in the pathway tRNA modification; tRNA-queuosine biosynthesis. Functionally, transfers and isomerizes the ribose moiety from AdoMet to the 7-aminomethyl group of 7-deazaguanine (preQ1-tRNA) to give epoxyqueuosine (oQ-tRNA). In Yersinia pestis, this protein is S-adenosylmethionine:tRNA ribosyltransferase-isomerase.